Consider the following 210-residue polypeptide: A-kinase-interacting protein 1 (210 aa).

Disordered stretches follow at residues 58-80 (HLEKQPAAGPQRVLPGEREERPP) and 136-162 (QRKDRKKTSLGPGGSYQISEHAPEASQ).

As to quaternary structure, interacts with PRKACA and RELA. As to expression, expressed at high levels in adult heart and at lower levels in brain, testis, ovary and skeletal muscle. Up-regulated in some breast cancer cell lines. Isoform 1 and isoform 3 are expressed in fetal brain.

Its subcellular location is the nucleus. Functionally, enhances NF-kappa-B transcriptional activity by regulating the nuclear localization of the NF-kappa-B subunit RELA and promoting the phosphorylation of RELA by PRKACA. Regulates the effect of the cAMP-dependent protein kinase signaling pathway on the NF-kappa-B activation cascade. In Homo sapiens (Human), this protein is A-kinase-interacting protein 1 (AKIP1).